A 361-amino-acid polypeptide reads, in one-letter code: MKASIRNKLERLRERHEEISALLAEPDTASDQKRFAALSREYAQLEPVIAELNHYQETEQALASAREMARDDDLEIREMAEEEISQAQARLEALEAELQVLLLPPDPNDGRNLYLEIRAGTGGDEAALFAGDLLRMYARYAERHGWRLEEISASEGEQGGYKEVITRISGEGAWSRLKFESGAHRVQRVPETESQGRIHTSACTVAVLPEPDAVEDITINPAELRVDTFRASGAGGQHVNKTDSAIRITHLPTGVVVECQSERSQHKNRAQALALLQARLKNAQQAEQSAQQTEQRRQLVGSGDRSERIRTYNFPQGRITDHRINLTLYRLEEILQGDLDQLVEPLRTEHQADQLAALAGD.

Gln237 is modified (N5-methylglutamine). The interval Gln285–Ser306 is disordered.

The protein belongs to the prokaryotic/mitochondrial release factor family. In terms of processing, methylated by PrmC. Methylation increases the termination efficiency of RF1.

It localises to the cytoplasm. Functionally, peptide chain release factor 1 directs the termination of translation in response to the peptide chain termination codons UAG and UAA. The chain is Peptide chain release factor 1 from Alkalilimnicola ehrlichii (strain ATCC BAA-1101 / DSM 17681 / MLHE-1).